The following is a 452-amino-acid chain: Na(+)/H(+) antiporter NhaA (452 aa).

The next 11 helical transmembrane spans lie at Met-23–Ile-43, Leu-71–Ile-91, Leu-108–Val-128, Gly-136–Gly-156, Val-165–Phe-185, His-189–Gly-209, Leu-216–His-236, Ile-316–Gly-336, Val-349–Val-369, Leu-385–Leu-405, and Glu-418–Leu-438.

The protein belongs to the NhaA Na(+)/H(+) (TC 2.A.33) antiporter family.

The protein resides in the cell inner membrane. It catalyses the reaction Na(+)(in) + 2 H(+)(out) = Na(+)(out) + 2 H(+)(in). Na(+)/H(+) antiporter that extrudes sodium in exchange for external protons. The polypeptide is Na(+)/H(+) antiporter NhaA (Porphyromonas gingivalis (strain ATCC BAA-308 / W83)).